An 804-amino-acid chain; its full sequence is Leucine--tRNA ligase (804 aa).

The 'HIGH' region signature appears at 40-51 (PYPSGQGLHVGH). The 'KMSKS' region motif lies at 576-580 (KMSKS). K579 contributes to the ATP binding site.

Belongs to the class-I aminoacyl-tRNA synthetase family.

Its subcellular location is the cytoplasm. The enzyme catalyses tRNA(Leu) + L-leucine + ATP = L-leucyl-tRNA(Leu) + AMP + diphosphate. This Oceanobacillus iheyensis (strain DSM 14371 / CIP 107618 / JCM 11309 / KCTC 3954 / HTE831) protein is Leucine--tRNA ligase.